A 337-amino-acid polypeptide reads, in one-letter code: Glyceraldehyde-3-phosphate dehydrogenase (337 aa).

Residues 12–13, Asp34, Arg78, and Thr121 contribute to the NAD(+) site; that span reads RI. Residues 151–153, Thr182, Arg199, 212–213, and Arg235 contribute to the D-glyceraldehyde 3-phosphate site; these read SCT and SG. The active-site Nucleophile is Cys152. Asn317 is an NAD(+) binding site.

Belongs to the glyceraldehyde-3-phosphate dehydrogenase family. As to quaternary structure, homotetramer.

It is found in the cytoplasm. The catalysed reaction is D-glyceraldehyde 3-phosphate + phosphate + NAD(+) = (2R)-3-phospho-glyceroyl phosphate + NADH + H(+). It participates in carbohydrate degradation; glycolysis; pyruvate from D-glyceraldehyde 3-phosphate: step 1/5. Functionally, catalyzes the oxidative phosphorylation of glyceraldehyde 3-phosphate (G3P) to 1,3-bisphosphoglycerate (BPG) using the cofactor NAD. The first reaction step involves the formation of a hemiacetal intermediate between G3P and a cysteine residue, and this hemiacetal intermediate is then oxidized to a thioester, with concomitant reduction of NAD to NADH. The reduced NADH is then exchanged with the second NAD, and the thioester is attacked by a nucleophilic inorganic phosphate to produce BPG. This Lactococcus lactis subsp. lactis (strain IL1403) (Streptococcus lactis) protein is Glyceraldehyde-3-phosphate dehydrogenase (gap).